Consider the following 403-residue polypeptide: MKSCIIATGNELTEGIILDKNSKYLAERLKSVGYDTLKITNVKDDLSLIKLSIEESLEMCDIIFLTGGLGPTQDDLTVQAVSESCNIDIVFNEELFEKIKKYYYNKTGKYLSILKKQSYVLKNAEILQNPVGSAPGQKVHFNGHTIYLLPGPYNEMKAIFDTHIYDELKSNMKNDHVEYSLYFYGLTEAELMQEVSVILKNFDYSTKIEEYIGPSLRIRMQKNDDFEPILEKILSQFSRYFIGFKSLEITLFDVLMKSSKTLSFAESCTGGMLSDTLVSIPGASNVFKGSLVTYSNESKVRLLDVKKETIEKFGAVSEETVKEMAYGLKKIMESDICVSVSGIAGPSLGSEQKPVGTVWYGFLINEDFFALKNVFTGDRDEIRKRATYFAFWNILDLVRKRYL.

It belongs to the CinA family.

This is CinA-like protein from Petrotoga mobilis (strain DSM 10674 / SJ95).